A 76-amino-acid polypeptide reads, in one-letter code: Acyl carrier protein (76 aa).

Positions 1-76 (MSVEEKISKI…DAIAYIKNKQ (76 aa)) constitute a Carrier domain. Position 36 is an O-(pantetheine 4'-phosphoryl)serine (Ser36).

It belongs to the acyl carrier protein (ACP) family. 4'-phosphopantetheine is transferred from CoA to a specific serine of apo-ACP by AcpS. This modification is essential for activity because fatty acids are bound in thioester linkage to the sulfhydryl of the prosthetic group.

It is found in the cytoplasm. It functions in the pathway lipid metabolism; fatty acid biosynthesis. In terms of biological role, carrier of the growing fatty acid chain in fatty acid biosynthesis. The polypeptide is Acyl carrier protein (Nitratidesulfovibrio vulgaris (strain DSM 19637 / Miyazaki F) (Desulfovibrio vulgaris)).